Reading from the N-terminus, the 510-residue chain is Serine carboxypeptidase-like 48 (510 aa).

A signal peptide spans 1-25 (MDSKTTFLTFLLCIFIFSHFSPSTS). 3 disulfide bridges follow: Cys141–Cys383, Cys309–Cys326, and Cys349–Cys354. N-linked (GlcNAc...) asparagine glycosylation is found at Asn158 and Asn159. Ser231 is a catalytic residue. Residues Asp421 and His478 contribute to the active site.

It belongs to the peptidase S10 family. Ubiquitous.

It is found in the secreted. Probable carboxypeptidase. The polypeptide is Serine carboxypeptidase-like 48 (SCPL48) (Arabidopsis thaliana (Mouse-ear cress)).